The chain runs to 84 residues: Putative defensin-like protein 165 (84 aa).

The first 27 residues, 1–27 (MSTKLFSYFMLLVVLFSVLTIIPKTEA), serve as a signal peptide directing secretion. 4 disulfides stabilise this stretch: Cys-31/Cys-78, Cys-41/Cys-60, Cys-46/Cys-72, and Cys-50/Cys-74.

Belongs to the DEFL family.

Its subcellular location is the secreted. In Arabidopsis thaliana (Mouse-ear cress), this protein is Putative defensin-like protein 165 (LCR12).